The sequence spans 420 residues: ATP phosphoribosyltransferase regulatory subunit (420 aa).

This sequence belongs to the class-II aminoacyl-tRNA synthetase family. HisZ subfamily. As to quaternary structure, heteromultimer composed of HisG and HisZ subunits.

Its subcellular location is the cytoplasm. It participates in amino-acid biosynthesis; L-histidine biosynthesis; L-histidine from 5-phospho-alpha-D-ribose 1-diphosphate: step 1/9. Required for the first step of histidine biosynthesis. May allow the feedback regulation of ATP phosphoribosyltransferase activity by histidine. In Bacillus cereus (strain AH187), this protein is ATP phosphoribosyltransferase regulatory subunit.